Reading from the N-terminus, the 590-residue chain is L-asparaginase (590 aa).

Positions 6-357 (AHVLVLYTGG…VEKKAMMVKN (352 aa)) constitute an Asparaginase/glutaminase domain. Residue Thr16 is the O-isoaspartyl threonine intermediate of the active site. Residues 44–351 (NDDDYVSTYY…KDCWELVEKK (308 aa)) are asparaginase. Substrate is bound by residues 85–87 (DSS) and 117–118 (TD). 4 ANK repeats span residues 398-427 (IFPQLLCYAASNGDIEMLKALHENGVDLSV), 431-460 (NGRNALHVAASAGHVGAVKYLLTQGVSFHL), 497-526 (RLGVELCLCASYGDTETLNSWLAAGADINQ), and 530-559 (NGETALHIAVKSRNKQLVHYLLDRDADPYK).

The protein in the N-terminal section; belongs to the asparaginase 1 family. May be present in the larval cuticle.

It catalyses the reaction L-asparagine + H2O = L-aspartate + NH4(+). The chain is L-asparaginase from Dirofilaria immitis (Canine heartworm).